A 129-amino-acid chain; its full sequence is Large ribosomal subunit protein bL20 (129 aa).

This sequence belongs to the bacterial ribosomal protein bL20 family.

Its function is as follows. Binds directly to 23S ribosomal RNA and is necessary for the in vitro assembly process of the 50S ribosomal subunit. It is not involved in the protein synthesizing functions of that subunit. The protein is Large ribosomal subunit protein bL20 of Kineococcus radiotolerans (strain ATCC BAA-149 / DSM 14245 / SRS30216).